The chain runs to 179 residues: ATP synthase subunit delta (179 aa).

The protein belongs to the ATPase delta chain family. As to quaternary structure, F-type ATPases have 2 components, F(1) - the catalytic core - and F(0) - the membrane proton channel. F(1) has five subunits: alpha(3), beta(3), gamma(1), delta(1), epsilon(1). F(0) has three main subunits: a(1), b(2) and c(10-14). The alpha and beta chains form an alternating ring which encloses part of the gamma chain. F(1) is attached to F(0) by a central stalk formed by the gamma and epsilon chains, while a peripheral stalk is formed by the delta and b chains.

The protein localises to the cell inner membrane. Functionally, f(1)F(0) ATP synthase produces ATP from ADP in the presence of a proton or sodium gradient. F-type ATPases consist of two structural domains, F(1) containing the extramembraneous catalytic core and F(0) containing the membrane proton channel, linked together by a central stalk and a peripheral stalk. During catalysis, ATP synthesis in the catalytic domain of F(1) is coupled via a rotary mechanism of the central stalk subunits to proton translocation. In terms of biological role, this protein is part of the stalk that links CF(0) to CF(1). It either transmits conformational changes from CF(0) to CF(1) or is implicated in proton conduction. The protein is ATP synthase subunit delta of Cupriavidus pinatubonensis (strain JMP 134 / LMG 1197) (Cupriavidus necator (strain JMP 134)).